The primary structure comprises 158 residues: Transcription elongation factor GreA (158 aa).

Residues 46–66 (AEYEAAKERQGFIEGRISELE) adopt a coiled-coil conformation.

It belongs to the GreA/GreB family.

Its function is as follows. Necessary for efficient RNA polymerase transcription elongation past template-encoded arresting sites. The arresting sites in DNA have the property of trapping a certain fraction of elongating RNA polymerases that pass through, resulting in locked ternary complexes. Cleavage of the nascent transcript by cleavage factors such as GreA or GreB allows the resumption of elongation from the new 3'terminus. GreA releases sequences of 2 to 3 nucleotides. In Neisseria meningitidis serogroup B (strain ATCC BAA-335 / MC58), this protein is Transcription elongation factor GreA.